Here is an 82-residue protein sequence, read N- to C-terminus: Mu-conotoxin GVIIJ (82 aa).

Residues 1-22 form the signal peptide; the sequence is MKLTCVVIVAALLLTACQLITA. Positions 23-47 are excised as a propeptide; that stretch reads LDCGGTQKHRALRSTIKLSLLRQHR. At W49 the chain carries 6'-bromotryptophan. Cystine bridges form between C50/C65, C57/C69, and C64/C76. The residue at position 53 (P53) is a 4-hydroxyproline. Position 71 (C71) interacts with a protein.

The protein belongs to the conotoxin O1 superfamily. Post-translationally, cys-71 is a key residue that tethers to the channel by covalent attachment, leading to nearly irreversible inhibition (k(off) very low). In order to determine the solution structure without dimerization, this residue was mutated to Cys. Expressed by the venom duct.

The protein localises to the secreted. In terms of biological role, mu-conotoxins block voltage-gated sodium channels (Nav). This toxin (GVIIJ(SSG)) blocks Nav1.1/SCN1A (Kd=11 nM), Nav1.2/SCN2A (Kd=11 nM), Nav1.3/SCN3A (Kd=15 nM), Nav1.4/SCN4A (Kd=4.7 nM), Nav1.6/SCN8A (Kd=360 nM) and Nav1.7/SCN9A (Kd=41 nM). It binds the channel at the newly described site 8, which is composed by two surfaces whose one contains a non-disulfide-bonded cysteine (which is free to covalently bind the toxin Cys-71). It is noteworthy that coexpression of subunits beta-2 or beta-4 (but not beta-1 or beta-3) protects rNav1.1-1.7 against block by the toxin, since these subunits (thanks to their extracellular domain) covalently bind to the key cysteine of the channel, thus preventing the covalent binding of the toxin. This Conus geographus (Geography cone) protein is Mu-conotoxin GVIIJ.